A 107-amino-acid polypeptide reads, in one-letter code: Urease subunit beta (107 aa).

It belongs to the urease beta subunit family. Heterotrimer of UreA (gamma), UreB (beta) and UreC (alpha) subunits. Three heterotrimers associate to form the active enzyme.

It localises to the cytoplasm. It catalyses the reaction urea + 2 H2O + H(+) = hydrogencarbonate + 2 NH4(+). The protein operates within nitrogen metabolism; urea degradation; CO(2) and NH(3) from urea (urease route): step 1/1. This is Urease subunit beta from Bacillus sp. (strain TB-90).